The following is a 159-amino-acid chain: Ribosomal RNA large subunit methyltransferase H (159 aa).

S-adenosyl-L-methionine contacts are provided by residues Gly108 and 127-132 (FGPMTF).

Belongs to the RNA methyltransferase RlmH family. In terms of assembly, homodimer.

It localises to the cytoplasm. It catalyses the reaction pseudouridine(1915) in 23S rRNA + S-adenosyl-L-methionine = N(3)-methylpseudouridine(1915) in 23S rRNA + S-adenosyl-L-homocysteine + H(+). Functionally, specifically methylates the pseudouridine at position 1915 (m3Psi1915) in 23S rRNA. This Magnetococcus marinus (strain ATCC BAA-1437 / JCM 17883 / MC-1) protein is Ribosomal RNA large subunit methyltransferase H.